A 2542-amino-acid polypeptide reads, in one-letter code: Ankyrin repeat and KH domain-containing protein 1 (2542 aa).

An N-acetylmethionine modification is found at methionine 1. Positions 1–10 (MLTDSGGGGT) are enriched in gly residues. Disordered stretches follow at residues 1–44 (MLTD…IRTV) and 50–69 (AGPASGVGSSGGGGSGSGTG). Over residues 20 to 29 (APRSAPAGAS) the composition is skewed to low complexity. Residues 57–69 (GSSGGGGSGSGTG) show a composition bias toward gly residues. 2 positions are modified to phosphoserine: serine 101 and serine 105. ANK repeat units follow at residues 204–233 (VDTRSLAEACSDGDVNAVRKLLDEGRSVNE), 237–266 (EGESLLCLACSAGYYELAQVLLAMHANVED), 271–300 (GDITPLMAASSGGYLDIVKLLLLHDADVNS), 304–333 (TGNTALTYACAGGFVDIVKVLLNEGANIED), 337–366 (NGHTPLMEAASAGHVEVARVLLDHGAGINT), 371–400 (FKESALTLACYKGHLDMVRFLLEAGADQEH), 404–433 (EMHTALMEACMDGHVEVARLLLDSGAQVNM), 437–466 (SFESPLTLAACGGHVELAALLIERGANLEE), 470–499 (EGYTPLMEAAREGHEEMVALLLAQGANINA), 504–533 (TQETALTLACCGGFSEVADFLIKAGADIEL), 534–563 (GCSTPLMEASQEGHLELVKYLLASGANVHA), 567–596 (TGDTALTYACENGHTDVADVLLQAGADLEH), 600–629 (GGRTPLMKAARAGHLCTVQFLISKGANVNR), 634–663 (NDHTVVSLACAGGHLAVVELLLAHGADPTH), and 667–696 (DGSTMLIEAAKGGHTNVVSYLLDYPNNVLS). Residues 775-852 (LECIVEETEG…RQLQMKTQQQ (78 aa)) are a coiled coil. Residue serine 803 is modified to Phosphoserine. ANK repeat units lie at residues 1054-1083 (NHDTALTLACAGGHEELVSVLIARDAKIEH), 1087-1116 (KGFTPLILAATAGHVGVVEILLDKGGDIEA), 1121-1150 (TKDTPLSLACSGGRQEVVDLLLARGANKEH), 1154-1183 (SDYTPLSLAASGGYVNIIKILLNAGAEINS), 1189-1218 (LGISPLMLAAMNGHVPAVKLLLDMGSDINA), 1223-1252 (NRNTALTLACFQGRAEVVSLLLDRKANVEH), 1256-1285 (TGLTPLMEAASGGYAEVGRVLLDKGADVNA), 1291-1320 (SRDTALTIAADKGHYKFCELLIHRGAHIDV), 1324-1353 (KGNTPLWLASNGGHFDVVQLLVQAGADVDA), and 1357-1386 (RKITPLMSAFRKGHVKVVQYLVKEVNQFPS). Residues 1415–1485 (KAKDQQAAEA…ENKPKENSEL (71 aa)) adopt a coiled-coil conformation. Disordered regions lie at residues 1441-1517 (REES…TIGI), 1534-1614 (NVVT…SQEL), and 1632-1664 (SQEEKTSTATSKTQTRLEGEVTPNSLSTSYKTV). The segment covering 1453 to 1463 (REKRKEKRKKK) has biased composition (basic residues). Basic and acidic residues predominate over residues 1464–1483 (KEEQKRKQEEDEENKPKENS). The span at 1484–1502 (ELPEDEDEEENDEDVEQEV) shows a compositional bias: acidic residues. Positions 1503 to 1517 (PIEPPSATTTTTIGI) are enriched in low complexity. Serine 1540 is subject to Phosphoserine. A Phosphothreonine modification is found at threonine 1553. Residues 1590–1603 (NSDSDNLDSTDCNS) are compositionally biased toward low complexity. The span at 1604–1614 (ESSSGGKSQEL) shows a compositional bias: polar residues. Serine 1632 is subject to Phosphoserine. Over residues 1638–1664 (STATSKTQTRLEGEVTPNSLSTSYKTV) the composition is skewed to polar residues. A Phosphothreonine modification is found at threonine 1653. A KH domain is found at 1695-1759 (RRSKKLSVPA…ESTRYAVQLI (65 aa)). Disordered stretches follow at residues 1886–1923 (NTWGPFPVRPVNPGNTNSSPKHNNTSRLPNQNGTVLPS), 1987–2106 (PSVS…APLT), and 2260–2367 (NMHP…IPPP). Residues 1898–1922 (PGNTNSSPKHNNTSRLPNQNGTVLP) show a composition bias toward polar residues. A compositionally biased stretch (low complexity) spans 1987 to 1996 (PSVSSAPITS). The span at 1997-2019 (GQAPTTFLPASTSQAQLSSQKME) shows a compositional bias: polar residues. Over residues 2042–2077 (CTPSSTANSCSSSASNTPGAPETHPSSSPTPTSSNT) the composition is skewed to low complexity. A compositionally biased stretch (polar residues) spans 2078–2106 (QEEAQPSSVSDLSPMSMPFASNSEPAPLT). Composition is skewed to low complexity over residues 2285–2308 (LPSIDPSGSSPSSSSAPLASFSGI) and 2337–2349 (TSASNSSTSAPPT).

Belongs to the mask family. As to quaternary structure, interacts with PTPN11. Isoform 2 interacts with HIV-1 VPR. Interacts with NOD2. In terms of tissue distribution, ubiquitous with high expression in cervix, spleen and brain. Expressed in hematopoietic cells with increased expression in leukemia cells. Isoform 2 is highly expressed in spleen with almost no expression in muscle and brain.

It localises to the cytoplasm. Its function is as follows. May play a role as a scaffolding protein that may be associated with the abnormal phenotype of leukemia cells. Isoform 2 may possess an antiapoptotic effect and protect cells during normal cell survival through its regulation of caspases. The polypeptide is Ankyrin repeat and KH domain-containing protein 1 (ANKHD1) (Homo sapiens (Human)).